We begin with the raw amino-acid sequence, 120 residues long: NAD(P)H-quinone oxidoreductase subunit 3, chloroplastic (120 aa).

Transmembrane regions (helical) follow at residues isoleucine 9–glycine 29, methionine 64–methionine 84, and valine 88–serine 108.

This sequence belongs to the complex I subunit 3 family. NDH is composed of at least 16 different subunits, 5 of which are encoded in the nucleus.

The protein localises to the plastid. It is found in the chloroplast thylakoid membrane. The enzyme catalyses a plastoquinone + NADH + (n+1) H(+)(in) = a plastoquinol + NAD(+) + n H(+)(out). It catalyses the reaction a plastoquinone + NADPH + (n+1) H(+)(in) = a plastoquinol + NADP(+) + n H(+)(out). Functionally, NDH shuttles electrons from NAD(P)H:plastoquinone, via FMN and iron-sulfur (Fe-S) centers, to quinones in the photosynthetic chain and possibly in a chloroplast respiratory chain. The immediate electron acceptor for the enzyme in this species is believed to be plastoquinone. Couples the redox reaction to proton translocation, and thus conserves the redox energy in a proton gradient. This is NAD(P)H-quinone oxidoreductase subunit 3, chloroplastic from Gossypium hirsutum (Upland cotton).